The sequence spans 221 residues: NAD(P)H-hydrate epimerase (221 aa).

The YjeF N-terminal domain occupies 10 to 210 (MQQIDNYTIE…DVGMLIPDDF (201 aa)). 58–62 (NNGAD) is a binding site for (6S)-NADPHX. The K(+) site is built by Asn59 and Asp120. Residues 124 to 130 (GVGLNNV) and Asp153 contribute to the (6S)-NADPHX site. Residue Thr156 participates in K(+) binding.

Belongs to the NnrE/AIBP family. Requires K(+) as cofactor.

It catalyses the reaction (6R)-NADHX = (6S)-NADHX. It carries out the reaction (6R)-NADPHX = (6S)-NADPHX. In terms of biological role, catalyzes the epimerization of the S- and R-forms of NAD(P)HX, a damaged form of NAD(P)H that is a result of enzymatic or heat-dependent hydration. This is a prerequisite for the S-specific NAD(P)H-hydrate dehydratase to allow the repair of both epimers of NAD(P)HX. The protein is NAD(P)H-hydrate epimerase of Leuconostoc mesenteroides subsp. mesenteroides (strain ATCC 8293 / DSM 20343 / BCRC 11652 / CCM 1803 / JCM 6124 / NCDO 523 / NBRC 100496 / NCIMB 8023 / NCTC 12954 / NRRL B-1118 / 37Y).